The primary structure comprises 147 residues: Hemoglobin subunit beta-1 (147 aa).

Serine 2 carries the N-acetylserine modification. One can recognise a Globin domain in the interval 3-147; it reads FLSAEEKGLV…VASALAHRYH (145 aa). The residue at position 18 (lysine 18) is an N6-succinyllysine. 2 positions are modified to phosphoserine: serine 45 and serine 51. The residue at position 60 (lysine 60) is an N6-succinyllysine. Heme b-binding residues include histidine 64 and histidine 93. Arginine 105 bears the Asymmetric dimethylarginine mark.

This sequence belongs to the globin family. In terms of assembly, heterotetramer of two alpha chains and two beta chains. Red blood cells.

Its function is as follows. Involved in oxygen transport from the lung to the various peripheral tissues. The protein is Hemoglobin subunit beta-1 (HBB1) of Panthera onca (Jaguar).